Consider the following 654-residue polypeptide: Fructose-1,6-bisphosphatase class 3 (654 aa).

The protein belongs to the FBPase class 3 family. Requires Mn(2+) as cofactor.

The catalysed reaction is beta-D-fructose 1,6-bisphosphate + H2O = beta-D-fructose 6-phosphate + phosphate. Its pathway is carbohydrate biosynthesis; gluconeogenesis. This Staphylococcus haemolyticus (strain JCSC1435) protein is Fructose-1,6-bisphosphatase class 3.